A 396-amino-acid chain; its full sequence is Acetate kinase (396 aa).

Mg(2+) is bound at residue asparagine 8. ATP is bound at residue lysine 15. Residue arginine 89 participates in substrate binding. Residue aspartate 146 is the Proton donor/acceptor of the active site. ATP is bound by residues 206-210, 283-285, and 331-335; these read HIGNG, DMR, and GMGEN. Glutamate 383 is a binding site for Mg(2+).

The protein belongs to the acetokinase family. Homodimer. Mg(2+) serves as cofactor. It depends on Mn(2+) as a cofactor.

It is found in the cytoplasm. The catalysed reaction is acetate + ATP = acetyl phosphate + ADP. The protein operates within metabolic intermediate biosynthesis; acetyl-CoA biosynthesis; acetyl-CoA from acetate: step 1/2. Its function is as follows. Catalyzes the formation of acetyl phosphate from acetate and ATP. Can also catalyze the reverse reaction. The polypeptide is Acetate kinase (Streptococcus uberis (strain ATCC BAA-854 / 0140J)).